A 45-amino-acid polypeptide reads, in one-letter code: Phospholipase A2 3 (45 aa).

Ca(2+) contacts are provided by Tyr-20, Gly-24, and Gly-25. A disulfide bond links Cys-21 and Cys-36. The active site involves His-39. Asp-40 contributes to the Ca(2+) binding site.

Ca(2+) serves as cofactor. Expressed by the venom gland.

It is found in the secreted. It carries out the reaction a 1,2-diacyl-sn-glycero-3-phosphocholine + H2O = a 1-acyl-sn-glycero-3-phosphocholine + a fatty acid + H(+). Its function is as follows. PLA2 catalyzes the calcium-dependent hydrolysis of the 2-acyl groups in 3-sn-phosphoglycerides. This Bothrops diporus (Chaco lancehead) protein is Phospholipase A2 3.